Reading from the N-terminus, the 228-residue chain is Calcyclin-binding protein (228 aa).

The residue at position 1 (methionine 1) is an N-acetylmethionine. Alanine 2 carries the post-translational modification N-acetylalanine. Positions 2 to 80 are interaction with SIAH1; it reads ASEELQKDLE…YTVKISNYGW (79 aa). The residue at position 3 (serine 3) is a Phosphoserine. Residues lysine 8 and lysine 19 each carry the N6-acetyllysine modification. Serine 34 bears the Phosphoserine mark. The CS domain maps to 73-167; sequence VKISNYGWDQ…VENTRWDYLT (95 aa). The interaction with SKP1 stretch occupies residues 73–228; sequence VKISNYGWDQ…EKQAKGDTEF (156 aa). Lysine 85 and lysine 118 each carry N6-acetyllysine. An interaction with S100A6 region spans residues 154–228; the sequence is CRKKVENTRW…EKQAKGDTEF (75 aa). In terms of domain architecture, SGS spans 168–228; that stretch reads QVEKECKEKE…EKQAKGDTEF (61 aa).

Homodimer. Interacts with proteins of the S100 family S100A1, S100A6, S100B, S100P and S100A12 in a calcium-dependent manner. Component of some large E3 complex at least composed of UBE2D1, SIAH1, CACYBP/SIP, SKP1, APC and TBL1X. Interacts directly with SIAH1, SIAH2 and SKP1. Phosphorylated on serine residues. Phosphorylated upon induction by RA or at high calcium concentrations.

Its subcellular location is the nucleus. It localises to the cytoplasm. Its function is as follows. May be involved in calcium-dependent ubiquitination and subsequent proteasomal degradation of target proteins. Probably serves as a molecular bridge in ubiquitin E3 complexes. Participates in the ubiquitin-mediated degradation of beta-catenin (CTNNB1). The chain is Calcyclin-binding protein (CACYBP) from Homo sapiens (Human).